The sequence spans 312 residues: MTKSVTVKDLKERLNLELICSETGLERPILTSDLSRPGLELTGFFSYYPEDRVQLFGMTEISFSEGMEPEERLKRYKQMCTKRTPAFVISRNLEVPKELVAAAKEADIPVLRSRLKTTRLSVYITNYLESRLAPVISMHGVLVDIYGLGVLITGSSGVGKSETALELVKRGHRLVADDNVEIRQEDEMTLIGSSPAIIEHLLEIRGLGIINVMTLFGAGAVRSSKKITIVVHLENWDPDKHYDRVGLDQEKTKIFDMDIPKITVPVRPGRNLSVIIEVAAMNFRLKNMGYNAAEQFTQDLNNLIGHNSSMND.

Active-site residues include histidine 139 and lysine 160. 154–161 contacts ATP; the sequence is GSSGVGKS. Serine 161 contacts Mg(2+). The active-site Proton acceptor; for phosphorylation activity. Proton donor; for dephosphorylation activity is aspartate 178. The tract at residues 202-211 is important for the catalytic mechanism of both phosphorylation and dephosphorylation; it reads LEIRGLGIIN. A Mg(2+)-binding site is contributed by glutamate 203. The active site involves arginine 244. The interval 265–270 is important for the catalytic mechanism of dephosphorylation; it reads PVRPGR.

The protein belongs to the HPrK/P family. In terms of assembly, homohexamer. Requires Mg(2+) as cofactor.

It catalyses the reaction [HPr protein]-L-serine + ATP = [HPr protein]-O-phospho-L-serine + ADP + H(+). It carries out the reaction [HPr protein]-O-phospho-L-serine + phosphate + H(+) = [HPr protein]-L-serine + diphosphate. Functionally, catalyzes the ATP- as well as the pyrophosphate-dependent phosphorylation of a specific serine residue in HPr, a phosphocarrier protein of the phosphoenolpyruvate-dependent sugar phosphotransferase system (PTS). HprK/P also catalyzes the pyrophosphate-producing, inorganic phosphate-dependent dephosphorylation (phosphorolysis) of seryl-phosphorylated HPr (P-Ser-HPr). The two antagonistic activities of HprK/P are regulated by several intracellular metabolites, which change their concentration in response to the absence or presence of rapidly metabolisable carbon sources (glucose, fructose, etc.) in the growth medium. Therefore, by controlling the phosphorylation state of HPr, HPrK/P is a sensor enzyme that plays a major role in the regulation of carbon metabolism and sugar transport: it mediates carbon catabolite repression (CCR), and regulates PTS-catalyzed carbohydrate uptake and inducer exclusion. The sequence is that of HPr kinase/phosphorylase from Listeria innocua serovar 6a (strain ATCC BAA-680 / CLIP 11262).